Consider the following 74-residue polypeptide: MKLTCVLIITVLFLTACQLTTAVTYSRGEHKHRALMSTGTNYRLLKTCRGSGRYCRSPYDCRRRYCRRISDACV.

The signal sequence occupies residues 1 to 22; it reads MKLTCVLIITVLFLTACQLTTA. A propeptide spanning residues 23 to 33 is cleaved from the precursor; sequence VTYSRGEHKHR.

Belongs to the conotoxin O1 superfamily. Homodimer; disulfide-linked. May contain 2 intrachain disulfide bonds and probably one interchain disulfide bond forming the homodimer. Post-translationally, the disulfide pairing is not important for activity towards the different nAChR subtypes, since this peptide without disulfide bond or with different disulfide bonds shows the same activity. In terms of tissue distribution, expressed by the venom duct.

The protein localises to the secreted. Its function is as follows. The activity of this natural homodimer has not been tested due to low abundance. The synthetic linear peptide has been refolded, giving 4 different monomeric isomers (m1 to m4) with 2 disulfide bonds each. All isomers potently inhibit rat alpha-1-beta-1-delta-epsilon/CHRNA1-CHRNB1-CHRND-CHRNE and human alpha-9-alpha-10/CHRNA9-CHRNA10 nicotinic acetylcholine receptors (nAChR). In addition, they show a modest inhibition at human alpha-3-beta-2/CHRNA3-CHRNB2, alpha-3-beta-4/CHRNA3-CHRNB4, alpha-7/CHRNA7, and alpha-4-beta-4/CHRNA4-CHRNB4. The synthetic monomer peptide without disulfide bonds shows a potent activity on alpha-9-alpha-10/CHRNA9 and CHRNA10 (IC(50)=16.2 nM). This linear peptide does not act as a competitive antagonist, or as a channel pore blocker of nAChR. The protein is O-conotoxin GeXXXIA of Conus generalis (General cone).